A 527-amino-acid polypeptide reads, in one-letter code: Amine oxidase [flavin-containing] A (527 aa).

Methionine 1 bears the N-acetylmethionine mark. Residues 1–497 (MASREKTSIE…HTFWERNLPS (497 aa)) are Cytoplasmic-facing. Serine 383 carries the post-translational modification Phosphoserine. Cysteine 406 carries the post-translational modification S-8alpha-FAD cysteine. Residues 498 to 518 (VTGLLKLIGFTTSVTALWIVA) traverse the membrane as a helical; Anchor for type IV membrane protein segment. The Mitochondrial intermembrane segment spans residues 519 to 527 (YKFRLLRRS). Residues 520–522 (KFR) form an interaction with membrane phospholipid headgroups region.

Belongs to the flavin monoamine oxidase family. As to quaternary structure, monomer, homo- or heterodimer (containing two subunits of similar size). Each subunit contains a covalently bound flavin. Enzymatically active as monomer. FAD is required as a cofactor.

It localises to the mitochondrion outer membrane. It catalyses the reaction a secondary aliphatic amine + O2 + H2O = a primary amine + an aldehyde + H2O2. The enzyme catalyses a primary methyl amine + O2 + H2O = an aldehyde + H2O2 + NH4(+). The catalysed reaction is (R)-adrenaline + O2 + H2O = (R)-3,4-dihydroxymandelaldehyde + methylamine + H2O2. It carries out the reaction dopamine + O2 + H2O = 3,4-dihydroxyphenylacetaldehyde + H2O2 + NH4(+). It catalyses the reaction tyramine + O2 + H2O = (4-hydroxyphenyl)acetaldehyde + H2O2 + NH4(+). The enzyme catalyses (R)-noradrenaline + O2 + H2O = (R)-3,4-dihydroxymandelaldehyde + H2O2 + NH4(+). The catalysed reaction is serotonin + O2 + H2O = (5-hydroxyindol-3-yl)acetaldehyde + H2O2 + NH4(+). It carries out the reaction kynuramine + O2 + H2O = 3-(2-aminophenyl)-3-oxopropanal + H2O2 + NH4(+). It catalyses the reaction tryptamine + O2 + H2O = indole-3-acetaldehyde + H2O2 + NH4(+). The enzyme catalyses 2-phenylethylamine + O2 + H2O = 2-phenylacetaldehyde + H2O2 + NH4(+). Catalyzes the oxidative deamination of primary and some secondary amine such as neurotransmitters, with concomitant reduction of oxygen to hydrogen peroxide and has important functions in the metabolism of neuroactive and vasoactive amines in the central nervous system and peripheral tissues. Preferentially oxidizes serotonin. Also catalyzes the oxidative deamination of kynuramine to 3-(2-aminophenyl)-3-oxopropanal that can spontaneously condense to 4-hydroxyquinoline. In Canis lupus familiaris (Dog), this protein is Amine oxidase [flavin-containing] A.